The chain runs to 94 residues: Small ribosomal subunit protein bS18 (94 aa).

The span at 1–11 (MANERPTSQQR) shows a compositional bias: polar residues. The segment at 1–24 (MANERPTSQQRPAGGPRKRRPFQR) is disordered.

This sequence belongs to the bacterial ribosomal protein bS18 family. As to quaternary structure, part of the 30S ribosomal subunit. Forms a tight heterodimer with protein bS6.

Functionally, binds as a heterodimer with protein bS6 to the central domain of the 16S rRNA, where it helps stabilize the platform of the 30S subunit. The sequence is that of Small ribosomal subunit protein bS18 from Pelobacter propionicus (strain DSM 2379 / NBRC 103807 / OttBd1).